The primary structure comprises 187 residues: Ribosome-recycling factor (187 aa).

It belongs to the RRF family.

Its subcellular location is the cytoplasm. Its function is as follows. Responsible for the release of ribosomes from messenger RNA at the termination of protein biosynthesis. May increase the efficiency of translation by recycling ribosomes from one round of translation to another. This chain is Ribosome-recycling factor, found in Nitrosococcus oceani (strain ATCC 19707 / BCRC 17464 / JCM 30415 / NCIMB 11848 / C-107).